The sequence spans 271 residues: Tryptophan synthase alpha chain (271 aa).

Active-site proton acceptor residues include Glu49 and Asp60.

This sequence belongs to the TrpA family. In terms of assembly, tetramer of two alpha and two beta chains.

It catalyses the reaction (1S,2R)-1-C-(indol-3-yl)glycerol 3-phosphate + L-serine = D-glyceraldehyde 3-phosphate + L-tryptophan + H2O. Its pathway is amino-acid biosynthesis; L-tryptophan biosynthesis; L-tryptophan from chorismate: step 5/5. Its function is as follows. The alpha subunit is responsible for the aldol cleavage of indoleglycerol phosphate to indole and glyceraldehyde 3-phosphate. The protein is Tryptophan synthase alpha chain of Rhizorhabdus wittichii (strain DSM 6014 / CCUG 31198 / JCM 15750 / NBRC 105917 / EY 4224 / RW1) (Sphingomonas wittichii).